The sequence spans 196 residues: Ribonuclease HII (196 aa).

In terms of domain architecture, RNase H type-2 spans 13–196; the sequence is LLVAGVDEAG…SFSPLKKKLF (184 aa). A divalent metal cation-binding residues include D19, E20, and D111.

The protein belongs to the RNase HII family. Mn(2+) is required as a cofactor. Mg(2+) serves as cofactor.

Its subcellular location is the cytoplasm. The enzyme catalyses Endonucleolytic cleavage to 5'-phosphomonoester.. Endonuclease that specifically degrades the RNA of RNA-DNA hybrids. The chain is Ribonuclease HII (rnhB) from Aquifex aeolicus (strain VF5).